We begin with the raw amino-acid sequence, 166 residues long: Interferon gamma (166 aa).

The signal sequence occupies residues 1-23 (MNYTSFILAFQLCAILGSSTYYC). At Q24 the chain carries Pyrrolidone carboxylic acid. N-linked (GlcNAc...) asparagine glycans are attached at residues N39 and N106. Residues 147-166 (ANLRKRKRSQNPFRGRRALQ) form a disordered region. A compositionally biased stretch (basic residues) spans 148–166 (NLRKRKRSQNPFRGRRALQ).

The protein belongs to the type II (or gamma) interferon family. Homodimer. Interacts with IFNGR1 (via extracellular domain); this interaction promotes IFNGR1 dimerization. Released primarily from activated T lymphocytes.

It localises to the secreted. In terms of biological role, type II interferon produced by immune cells such as T-cells and NK cells that plays crucial roles in antimicrobial, antiviral, and antitumor responses by activating effector immune cells and enhancing antigen presentation. Primarily signals through the JAK-STAT pathway after interaction with its receptor IFNGR1 to affect gene regulation. Upon IFNG binding, IFNGR1 intracellular domain opens out to allow association of downstream signaling components JAK2, JAK1 and STAT1, leading to STAT1 activation, nuclear translocation and transcription of IFNG-regulated genes. Many of the induced genes are transcription factors such as IRF1 that are able to further drive regulation of a next wave of transcription. Plays a role in class I antigen presentation pathway by inducing a replacement of catalytic proteasome subunits with immunoproteasome subunits. In turn, increases the quantity, quality, and repertoire of peptides for class I MHC loading. Increases the efficiency of peptide generation also by inducing the expression of activator PA28 that associates with the proteasome and alters its proteolytic cleavage preference. Up-regulates as well MHC II complexes on the cell surface by promoting expression of several key molecules such as cathepsins B/CTSB, H/CTSH, and L/CTSL. Participates in the regulation of hematopoietic stem cells during development and under homeostatic conditions by affecting their development, quiescence, and differentiation. This Equus asinus (Donkey) protein is Interferon gamma (IFNG).